We begin with the raw amino-acid sequence, 144 residues long: MYFVDRSKIEKTLGFFEHQLALFDSQTDWQSEIGELALQRIGHLLIECILDTGNDMIDGFIMRDPGSYDDIMDILVDEKVVTEKEGDELKKLIAYRKTLVQQYLLADSGELYRLIKAHQTALQDFPKRIRSYLETELGPVSAFK.

Residue Arg96 is part of the active site. The RX(4)HXY motif motif lies at 96 to 103; it reads RKTLVQQY.

It belongs to the HepT RNase toxin family. Homodimer, probably forms a complex with cognate antitoxin YutD.

Functionally, probable toxic component of a putative type VII toxin-antitoxin (TA) system, probably an RNase. Probably neutralized by cognate antitoxin YutD. This Bacillus subtilis (strain 168) protein is Putative RNase YutE (yutE).